The primary structure comprises 547 residues: Apolipoprotein N-acyltransferase (547 aa).

The next 5 helical transmembrane spans lie at 31 to 51 (ILSGILVGTSYIPFPPWALIF), 71 to 91 (FWAGWVTQFILTLIGFHWIAY), 106 to 126 (LALLLFCAFMHLYIPVAVAAG), 180 to 200 (LVGFHGLSAVVLLFNAWMGYV), and 210 to 230 (ALSHLSLLALTFAALVGWGFW). Residues 247–515 (VQANIGNLEK…KYLKNAPLTF (269 aa)) form the CN hydrolase domain. Glu-294 acts as the Proton acceptor in catalysis. Lys-364 is an active-site residue. Cys-418 serves as the catalytic Nucleophile. The helical transmembrane segment at 515–535 (FFVQWGHWDWIVILLVLGAVI) threads the bilayer.

The protein belongs to the CN hydrolase family. Apolipoprotein N-acyltransferase subfamily.

It is found in the cell inner membrane. The catalysed reaction is N-terminal S-1,2-diacyl-sn-glyceryl-L-cysteinyl-[lipoprotein] + a glycerophospholipid = N-acyl-S-1,2-diacyl-sn-glyceryl-L-cysteinyl-[lipoprotein] + a 2-acyl-sn-glycero-3-phospholipid + H(+). The protein operates within protein modification; lipoprotein biosynthesis (N-acyl transfer). Its function is as follows. Catalyzes the phospholipid dependent N-acylation of the N-terminal cysteine of apolipoprotein, the last step in lipoprotein maturation. This is Apolipoprotein N-acyltransferase from Bdellovibrio bacteriovorus (strain ATCC 15356 / DSM 50701 / NCIMB 9529 / HD100).